Here is a 200-residue protein sequence, read N- to C-terminus: Protein GrpE (200 aa).

The disordered stretch occupies residues 15–47; sequence DLEMDLNEEELEESEVNEDKEFEELDKSEEENE. Residues 16–47 show a composition bias toward acidic residues; the sequence is LEMDLNEEELEESEVNEDKEFEELDKSEEENE.

The protein belongs to the GrpE family. As to quaternary structure, homodimer.

It localises to the cytoplasm. Its function is as follows. Participates actively in the response to hyperosmotic and heat shock by preventing the aggregation of stress-denatured proteins, in association with DnaK and GrpE. It is the nucleotide exchange factor for DnaK and may function as a thermosensor. Unfolded proteins bind initially to DnaJ; upon interaction with the DnaJ-bound protein, DnaK hydrolyzes its bound ATP, resulting in the formation of a stable complex. GrpE releases ADP from DnaK; ATP binding to DnaK triggers the release of the substrate protein, thus completing the reaction cycle. Several rounds of ATP-dependent interactions between DnaJ, DnaK and GrpE are required for fully efficient folding. The protein is Protein GrpE of Clostridium tetani (strain Massachusetts / E88).